The chain runs to 274 residues: NAD kinase (274 aa).

The active-site Proton acceptor is the Asp61. Residues 61 to 62 (DG), Lys66, 134 to 135 (ND), Lys145, Asp164, and 175 to 180 (TAYSLS) each bind NAD(+).

The protein belongs to the NAD kinase family. Requires a divalent metal cation as cofactor.

It localises to the cytoplasm. It carries out the reaction NAD(+) + ATP = ADP + NADP(+) + H(+). Involved in the regulation of the intracellular balance of NAD and NADP, and is a key enzyme in the biosynthesis of NADP. Catalyzes specifically the phosphorylation on 2'-hydroxyl of the adenosine moiety of NAD to yield NADP. The polypeptide is NAD kinase (Clostridium tetani (strain Massachusetts / E88)).